We begin with the raw amino-acid sequence, 1845 residues long: Collagen alpha-1(XXVII) chain (1845 aa).

The first 39 residues, 1–39, serve as a signal peptide directing secretion; sequence MGTGFARGARGTAASGPGGGFLFAWILVSFTCHLASTQG. The propeptide at 40–609 is N-terminal propeptide; the sequence is APEDVDVLQR…LGPTPFPMLM (570 aa). The 166-residue stretch at 72–237 folds into the Laminin G-like domain; it reads PSGFIFTQRA…NYCAHLRERC (166 aa). N272 carries an N-linked (GlcNAc...) asparagine glycan. Disordered stretches follow at residues 299 to 478, 502 to 572, 608 to 774, and 827 to 1608; these read TKPL…VPKT, PPLG…RPST, LMGP…MGRP, and LMGG…HPIQ. A compositionally biased stretch (polar residues) spans 312-323; sequence HSSSQTPLSPAK. Composition is skewed to low complexity over residues 327 to 343 and 356 to 372; these read RKTP…NSTR and TTTS…SVSP. Residue N340 is glycosylated (N-linked (GlcNAc...) asparagine). A compositionally biased stretch (pro residues) spans 429-439; the sequence is PRPPVPSPQPL. A compositionally biased stretch (polar residues) spans 444–454; that stretch reads GLSKKFTNPTV. The span at 554 to 564 shows a compositional bias: basic and acidic residues; the sequence is SARDASPRDLT. Collagen-like domains are found at residues 610-664, 673-732, 742-801, 817-876, 877-936, 937-996, 997-1038, 1039-1096, 1117-1176, 1177-1236, and 1240-1299; these read GPPG…GDPG, GAKG…PGPV, GYIG…PGPP, GYPG…PGPL, GKAG…EGPM, GPPG…VGEK, GDRG…PGSR, GLPG…GAKG, GSQG…PGLE, GDHG…QGEK, and GAKG…NGHK. The segment at 610 to 1603 is triple-helical; the sequence is GPPGSKGDCG…RGRPGPPGPP (994 aa). Positions 639–654 are enriched in pro residues; sequence RGPPGPYGNPGPPGPP. Composition is skewed to low complexity over residues 677-690 and 699-719; these read NMGL…PGPL and PGAA…SPGA. Residues 865 to 874 are compositionally biased toward gly residues; the sequence is GLPGGRGKPG. The segment covering 896–909 has biased composition (low complexity); sequence FPGDIGPPGDNGPE. A compositionally biased stretch (gly residues) spans 1018–1027; the sequence is GTPGGIGNPG. 3 stretches are compositionally biased toward low complexity: residues 1074–1086, 1112–1122, and 1152–1167; these read RGRP…QGAA, LPGEPGSQGPQ, and KGDL…QGLI. Basic and acidic residues-rich tracts occupy residues 1187 to 1212 and 1226 to 1238; these read LKGD…KGED and REGK…EKGQ. Composition is skewed to basic and acidic residues over residues 1311-1323 and 1335-1345; these read KGEK…DGKT and PVGDRGDRGEP. A Collagen-like 12 domain is found at 1325–1384; that stretch reads GPPGPPGDRGPVGDRGDRGEPGDPGYPGQEGVQGLRGEPGQQGQPGHPGPRGRPGPKGSK. Low complexity-rich tracts occupy residues 1360–1369, 1395–1422, and 1438–1465; these read RGEPGQQGQP, KAGP…RQGP, and PGYQ…PGVA. Collagen-like domains are found at residues 1424 to 1483, 1484 to 1543, and 1544 to 1603; these read GTAG…SGLP, GQLG…KGIQ, and GPRG…PGPP. Over residues 1557–1572 the composition is skewed to low complexity; that stretch reads IIGPPGMLGPSGLPGP. A compositionally biased stretch (pro residues) spans 1588 to 1605; it reads RGPPGPRGRPGPPGPPWH. Positions 1607-1845 are cleaved as a propeptide — C-terminal propeptide; that stretch reads IQFQQDDLGA…RLEVGPACFL (239 aa). Residues 1645–1845 enclose the Fibrillar collagen NC1 domain; the sequence is GEIFKTLHYL…RLEVGPACFL (201 aa). 3 disulfides stabilise this stretch: C1675–C1707, C1716–C1843, and C1752–C1796. Residues D1693, N1695, C1698, and D1701 each contribute to the Ca(2+) site. N1754 carries an N-linked (GlcNAc...) asparagine glycan.

Belongs to the fibrillar collagen family. As to expression, highly expressed in cartilage, eye and ear.

The protein localises to the secreted. The protein resides in the extracellular space. Its subcellular location is the extracellular matrix. Plays a role during the calcification of cartilage and the transition of cartilage to bone. This Mus musculus (Mouse) protein is Collagen alpha-1(XXVII) chain (Col27a1).